A 1330-amino-acid chain; its full sequence is Pre-mRNA-splicing factor CWC22 homolog (1330 aa).

The tract at residues 1 to 377 is disordered; the sequence is MGESDAESDS…AAKITERQRK (377 aa). Low complexity predominate over residues 9-36; sequence DSSSNSSSSDTSSGSDSDARSESSSSES. Positions 46-94 are enriched in basic and acidic residues; the sequence is QEESAKDAKKTDDTDRGEKRAKERDAGQDEQPTEQKKTPAAEPRSERQH. Residues 99 to 113 are compositionally biased toward low complexity; the sequence is AGVEKQQEEAVAAAE. Residues 115–135 are compositionally biased toward basic and acidic residues; the sequence is ESEKLNEAKKVETPVQRKEEA. Polar residues predominate over residues 138 to 148; it reads SSVTKELNSPK. Positions 149–166 are enriched in basic and acidic residues; that stretch reads AQEENAARELEERRKDEE. The span at 168 to 177 shows a compositional bias: polar residues; it reads PVTTNGSSKE. T191 and T201 each carry phosphothreonine. Composition is skewed to basic and acidic residues over residues 191–201 and 208–236; these read TADHIEEGEIT and LPTKEEKKAVASKSPPKETQRKQSRSPDG. Phosphoserine is present on residues S219 and S221. A compositionally biased stretch (basic residues) spans 252–277; sequence SRRRRRSRSKGSRTRSRSKSPIRRRS. 2 stretches are compositionally biased toward basic and acidic residues: residues 278–307 and 316–325; these read NSLERRRVERQRRHEERDKRDEERAKEREK and SSRRRDDSRE. Residues 355–366 are compositionally biased toward low complexity; the sequence is TETNADNETVTE. Positions 420-603 constitute an MIF4G domain; that stretch reads KKSIHGYINK…EVLFQIRKDG (184 aa). Positions 660–697 are disordered; it reads REILGSDDGSSSGSGSGSDSDSDSDGESGSDAEKKAEA. Residues 665 to 678 are compositionally biased toward low complexity; it reads SDDGSSSGSGSGSD. The span at 679 to 689 shows a compositional bias: acidic residues; sequence SDSDSDGESGS. The region spanning 710–826 is the MI domain; that stretch reads ALRRTIYLTI…SWDVLECIQL (117 aa). The disordered stretch occupies residues 926 to 1330; that stretch reads FRDGSAPAGN…RSSRRSKGRS (405 aa). Residues 941–951 show a composition bias toward low complexity; the sequence is SSSSSSSSSSD. Positions 952-963 are enriched in acidic residues; that stretch reads TDSEDSSEEDSS. Over residues 964–976 the composition is skewed to low complexity; that stretch reads SDSSSESSSSDSS. The span at 980 to 1012 shows a compositional bias: basic residues; the sequence is KKKRKRKDKDKKKSKKATKEKSKKTKNKKKKKK. Residues 1013 to 1033 are compositionally biased toward basic and acidic residues; sequence AEKEQEKEKEKQRKSKKEKEK. A compositionally biased stretch (basic residues) spans 1034–1054; it reads DKKRKKEEKKAAKKKSKHRRK. Positions 1072-1082 are enriched in low complexity; the sequence is SESSDSSNSSS. The segment covering 1089–1110 has biased composition (basic and acidic residues); the sequence is PQAKIKRQEHVEKNKFRGRTQD. T1108 is subject to Phosphothreonine. Phosphoserine occurs at positions 1111, 1121, 1180, and 1181. Composition is skewed to basic and acidic residues over residues 1133–1195 and 1203–1320; these read RRRD…VAHD and SRSY…SRRE. The residue at position 1182 (Y1182) is a Phosphotyrosine. The span at 1321–1330 shows a compositional bias: basic residues; the sequence is RSSRRSKGRS.

It belongs to the CWC22 family. Component of the spliceosome C complex. Interacts with eIF4AIII.

Its subcellular location is the nucleus speckle. Required for pre-mRNA splicing and for exon-junction complex (EJC) assembly. Hinders eIF4AIII from non-specifically binding RNA and escorts it to the splicing machinery to promote EJC assembly on mature mRNAs. The polypeptide is Pre-mRNA-splicing factor CWC22 homolog (ncm) (Drosophila melanogaster (Fruit fly)).